A 458-amino-acid polypeptide reads, in one-letter code: Periphilin-1 (458 aa).

Basic and acidic residues-rich tracts occupy residues 1–18 and 63–107; these read MWSE…ERAP and EGRS…DGFR. Disordered regions lie at residues 1-51 and 63-284; these read MWSE…SYNR and EGRS…LFED. The short motif at 103 to 109 is the Nuclear localization signal element; the sequence is RDGFRRK. Residue K109 forms a Glycyl lysine isopeptide (Lys-Gly) (interchain with G-Cter in SUMO2) linkage. S110, S114, S133, and S140 each carry phosphoserine. Positions 116–142 are enriched in basic and acidic residues; it reads YARERSPYKRDNTFFRESPVGRKDSPH. Positions 143–154 are enriched in low complexity; it reads SRSGSSVSSRSY. A Glycyl lysine isopeptide (Lys-Gly) (interchain with G-Cter in SUMO2) cross-link involves residue K160. A phosphoserine mark is found at S161 and S167. Residue K180 forms a Glycyl lysine isopeptide (Lys-Gly) (interchain with G-Cter in SUMO2) linkage. A compositionally biased stretch (basic and acidic residues) spans 181-194; that stretch reads RQNEGNPERDKERP. S197 is modified (phosphoserine). K199 participates in a covalent cross-link: Glycyl lysine isopeptide (Lys-Gly) (interchain with G-Cter in SUMO2). Phosphoserine occurs at positions 201 and 205. Positions 205-215 are enriched in low complexity; sequence SPSSGSAVSSS. Residues 217 to 230 show a composition bias toward basic and acidic residues; it reads VLDKPSRLTEKELA. K227 participates in a covalent cross-link: Glycyl lysine isopeptide (Lys-Gly) (interchain with G-Cter in SUMO2). N6-acetyllysine; alternate is present on residues K235 and K240. Residues K235 and K240 each participate in a glycyl lysine isopeptide (Lys-Gly) (interchain with G-Cter in SUMO2); alternate cross-link. The span at 237–246 shows a compositional bias: basic and acidic residues; sequence AAEKLEKSDE. The residue at position 325 (S325) is a Phosphoserine. K328 participates in a covalent cross-link: Glycyl lysine isopeptide (Lys-Gly) (interchain with G-Cter in SUMO2). Positions 345–406 are disordered; that stretch reads GQTWQQVPPV…TQLRRTTGAP (62 aa). Pro residues predominate over residues 377 to 386; it reads PQPPQAPQPL. The span at 388-398 shows a compositional bias: basic residues; that stretch reads PRKKRVRRTTQ. K453 participates in a covalent cross-link: Glycyl lysine isopeptide (Lys-Gly) (interchain with G-Cter in SUMO2).

Homodimer. Component of the HUSH complex; at least composed of TASOR, PPHLN1 and MPHOSPH8. Interacts with SIN3A and HDAC1. May interact with PPL. Substrate of transglutaminase (in vitro). In terms of tissue distribution, ubiquitous.

Its subcellular location is the nucleus. The protein localises to the cytoplasm. The protein resides in the chromosome. In terms of biological role, component of the HUSH complex, a multiprotein complex that mediates epigenetic repression. The HUSH complex is recruited to genomic loci rich in H3K9me3 and is probably required to maintain transcriptional silencing by promoting recruitment of SETDB1, a histone methyltransferase that mediates further deposition of H3K9me3. In the HUSH complex, contributes to the maintenance of the complex at chromatin. Acts as a transcriptional corepressor and regulates the cell cycle, probably via the HUSH complex. The HUSH complex is also involved in the silencing of unintegrated retroviral DNA: some part of the retroviral DNA formed immediately after infection remains unintegrated in the host genome and is transcriptionally repressed. May be involved in epithelial differentiation by contributing to epidermal integrity and barrier formation. This chain is Periphilin-1, found in Homo sapiens (Human).